We begin with the raw amino-acid sequence, 127 residues long: DNA-directed RNA polymerases I, II, and III subunit RPABC2 (127 aa).

Acidic residues predominate over residues 1-34 (MSDNEDNFDGDDFDDVEEDEGLDDLENAEEEGQE). The disordered stretch occupies residues 1-53 (MSDNEDNFDGDDFDDVEEDEGLDDLENAEEEGQENVEILPSGERPQANQKRIT). An N-acetylserine modification is found at serine 2. At serine 2 the chain carries Phosphoserine; by CK2.

It belongs to the archaeal Rpo6/eukaryotic RPB6 RNA polymerase subunit family. In terms of assembly, component of the RNA polymerase I (Pol I), RNA polymerase II (Pol II) and RNA polymerase III (Pol III) complexes consisting of at least 13, 12 and 17 subunits, respectively. Pol I complex consists of a ten-subunit catalytic core composed of POLR1A/RPA1, POLR1B/RPA2, POLR1C/RPAC1, POLR1D/RPAC2, POLR1H/RPA12, POLR2E/RPABC1, POLR2F/RPABC2, POLR2H/RPABC3, POLR2K/RPABC4 and POLR2L/RPABC5; a mobile stalk subunit POLR1F/RPA43 protruding from the core and additional subunits homologous to general transcription factors POLR1E/RPA49 and POLR1G/RPA34. Part of Pol I pre-initiation complex (PIC), in which Pol I core assembles with RRN3 and promoter-bound UTBF and SL1/TIF-IB complex. Pol II complex contains a ten-subunit catalytic core composed of POLR2A/RPB1, POLR2B/RPB2, POLR2C/RPB3, POLR2I/RPB9, POLR2J/RPB11, POLR2E/RPABC1, POLR2F/RPABC2, POLR2H/RPABC3, POLR2K/RPABC4 and POLR2L/RPABC5 and a mobile stalk composed of two subunits POLR2D/RPB4 and POLR2G/RPB7. Part of Pol II(G) complex, in which Pol II core associates with an additional subunit POLR2M; unlike conventional Pol II, Pol II(G) functions as a transcriptional repressor. Part of TBP-based Pol II pre-initiation complex (PIC), in which Pol II core assembles with general transcription factors and other specific initiation factors including GTF2E1, GTF2E2, GTF2F1, GTF2F2, TCEA1, ERCC2, ERCC3, GTF2H2, GTF2H3, GTF2H4, GTF2H5, GTF2A1, GTF2A2, GTF2B and TBP; this large multi-subunit PIC complex mediates DNA unwinding and targets Pol II core to the transcription start site where the first phosphodiester bond forms. Pol III complex consists of a ten-subunit catalytic core composed of POLR3A/RPC1, POLR3B/RPC2, POLR1C/RPAC1, POLR1D/RPAC2, POLR3K/RPC10, POLR2E/RPABC1, POLR2F/RPABC2, POLR2H/RPABC3, POLR2K/RPABC4 and POLR2L/RPABC5; a mobile stalk composed of two subunits POLR3H/RPC8 and CRCP/RPC9, protruding from the core and functioning primarily in transcription initiation; and additional subunits homologous to general transcription factors of the RNA polymerase II machinery, POLR3C/RPC3-POLR3F/RPC6-POLR3G/RPC7 heterotrimer required for transcription initiation and POLR3D/RPC4-POLR3E/RPC5 heterodimer involved in both transcription initiation and termination.

It localises to the nucleus. Its subcellular location is the nucleolus. Its function is as follows. DNA-dependent RNA polymerase catalyzes the transcription of DNA into RNA using the four ribonucleoside triphosphates as substrates. Common component of RNA polymerases I, II, and III which synthesize ribosomal RNA precursors, mRNA precursors and many functional non-coding RNAs, and small RNAs, such as 5S rRNA and tRNAs, respectively. Pol II is the central component of the basal RNA polymerase II transcription machinery. Pols are composed of mobile elements that move relative to each other. In Pol II, POLR2F/RPABC2 is part of the clamp element and together with parts of POLR2A/RPB1 and POLR2B/RPB2 forms a pocket to which the POLR2D/RPB4-POLR2G/RPB7 subcomplex binds. This is DNA-directed RNA polymerases I, II, and III subunit RPABC2 from Mus musculus (Mouse).